The sequence spans 281 residues: uncharacterized protein (281 aa).

The chain crosses the membrane as a helical span at residues 5-27; sequence AYVTVIYGNNIYLTGALVLGYTL.

Its subcellular location is the membrane. This is an uncharacterized protein from Acanthamoeba polyphaga mimivirus (APMV).